The following is a 133-amino-acid chain: Small ribosomal subunit protein uS19 (133 aa).

The protein belongs to the universal ribosomal protein uS19 family.

Protein S19 forms a complex with S13 that binds strongly to the 16S ribosomal RNA. This Archaeoglobus fulgidus (strain ATCC 49558 / DSM 4304 / JCM 9628 / NBRC 100126 / VC-16) protein is Small ribosomal subunit protein uS19 (rps19).